The chain runs to 193 residues: Probable nicotinate-nucleotide adenylyltransferase (193 aa).

Belongs to the NadD family.

It catalyses the reaction nicotinate beta-D-ribonucleotide + ATP + H(+) = deamido-NAD(+) + diphosphate. It functions in the pathway cofactor biosynthesis; NAD(+) biosynthesis; deamido-NAD(+) from nicotinate D-ribonucleotide: step 1/1. Functionally, catalyzes the reversible adenylation of nicotinate mononucleotide (NaMN) to nicotinic acid adenine dinucleotide (NaAD). This is Probable nicotinate-nucleotide adenylyltransferase from Coprothermobacter proteolyticus (strain ATCC 35245 / DSM 5265 / OCM 4 / BT).